Reading from the N-terminus, the 436-residue chain is 3-ketoacyl-CoA thiolase (436 aa).

Cys-99 serves as the catalytic Acyl-thioester intermediate. Catalysis depends on proton acceptor residues His-392 and Cys-422.

Belongs to the thiolase-like superfamily. Thiolase family. As to quaternary structure, heterotetramer of two alpha chains (FadJ) and two beta chains (FadI).

It is found in the cytoplasm. The catalysed reaction is an acyl-CoA + acetyl-CoA = a 3-oxoacyl-CoA + CoA. The protein operates within lipid metabolism; fatty acid beta-oxidation. In terms of biological role, catalyzes the final step of fatty acid oxidation in which acetyl-CoA is released and the CoA ester of a fatty acid two carbons shorter is formed. In Shewanella putrefaciens (strain CN-32 / ATCC BAA-453), this protein is 3-ketoacyl-CoA thiolase.